Reading from the N-terminus, the 228-residue chain is Cytochrome c oxidase subunit 2 (228 aa).

The Mitochondrial intermembrane portion of the chain corresponds to 1–14 (MAYPLQLGLQDASS). A helical membrane pass occupies residues 15 to 45 (PIMEELTNFHDHTLMIVFLISSLVLYLISLM). The Mitochondrial matrix portion of the chain corresponds to 46 to 59 (LTTKLIHTSTMDAQ). A helical membrane pass occupies residues 60–87 (EVETIWTILPAIILILIALPSLRILYMM). Residues 88–228 (DEINNPVLTV…FENWSVSMTQ (141 aa)) are Mitochondrial intermembrane-facing. Residues His-161, Cys-196, Glu-198, Cys-200, His-204, and Met-207 each contribute to the Cu cation site. Glu-198 lines the Mg(2+) pocket.

The protein belongs to the cytochrome c oxidase subunit 2 family. Component of the cytochrome c oxidase (complex IV, CIV), a multisubunit enzyme composed of 14 subunits. The complex is composed of a catalytic core of 3 subunits MT-CO1, MT-CO2 and MT-CO3, encoded in the mitochondrial DNA, and 11 supernumerary subunits COX4I, COX5A, COX5B, COX6A, COX6B, COX6C, COX7A, COX7B, COX7C, COX8 and NDUFA4, which are encoded in the nuclear genome. The complex exists as a monomer or a dimer and forms supercomplexes (SCs) in the inner mitochondrial membrane with NADH-ubiquinone oxidoreductase (complex I, CI) and ubiquinol-cytochrome c oxidoreductase (cytochrome b-c1 complex, complex III, CIII), resulting in different assemblies (supercomplex SCI(1)III(2)IV(1) and megacomplex MCI(2)III(2)IV(2)). Found in a complex with TMEM177, COA6, COX18, COX20, SCO1 and SCO2. Interacts with TMEM177 in a COX20-dependent manner. Interacts with COX20. Interacts with COX16. Cu cation serves as cofactor.

It is found in the mitochondrion inner membrane. It catalyses the reaction 4 Fe(II)-[cytochrome c] + O2 + 8 H(+)(in) = 4 Fe(III)-[cytochrome c] + 2 H2O + 4 H(+)(out). Component of the cytochrome c oxidase, the last enzyme in the mitochondrial electron transport chain which drives oxidative phosphorylation. The respiratory chain contains 3 multisubunit complexes succinate dehydrogenase (complex II, CII), ubiquinol-cytochrome c oxidoreductase (cytochrome b-c1 complex, complex III, CIII) and cytochrome c oxidase (complex IV, CIV), that cooperate to transfer electrons derived from NADH and succinate to molecular oxygen, creating an electrochemical gradient over the inner membrane that drives transmembrane transport and the ATP synthase. Cytochrome c oxidase is the component of the respiratory chain that catalyzes the reduction of oxygen to water. Electrons originating from reduced cytochrome c in the intermembrane space (IMS) are transferred via the dinuclear copper A center (CU(A)) of subunit 2 and heme A of subunit 1 to the active site in subunit 1, a binuclear center (BNC) formed by heme A3 and copper B (CU(B)). The BNC reduces molecular oxygen to 2 water molecules using 4 electrons from cytochrome c in the IMS and 4 protons from the mitochondrial matrix. This Meriones shawi (Shaw's jird) protein is Cytochrome c oxidase subunit 2 (MT-CO2).